The primary structure comprises 493 residues: Glutamyl-tRNA(Gln) amidotransferase subunit A (493 aa).

Residues Lys78 and Ser158 each act as charge relay system in the active site. Catalysis depends on Ser182, which acts as the Acyl-ester intermediate.

It belongs to the amidase family. GatA subfamily. Heterotrimer of A, B and C subunits.

It catalyses the reaction L-glutamyl-tRNA(Gln) + L-glutamine + ATP + H2O = L-glutaminyl-tRNA(Gln) + L-glutamate + ADP + phosphate + H(+). Functionally, allows the formation of correctly charged Gln-tRNA(Gln) through the transamidation of misacylated Glu-tRNA(Gln) in organisms which lack glutaminyl-tRNA synthetase. The reaction takes place in the presence of glutamine and ATP through an activated gamma-phospho-Glu-tRNA(Gln). The chain is Glutamyl-tRNA(Gln) amidotransferase subunit A from Rickettsia rickettsii (strain Iowa).